Reading from the N-terminus, the 296-residue chain is tRNA dimethylallyltransferase (296 aa).

11–18 is an ATP binding site; that stretch reads GPTAVGKT. Position 13 to 18 (13 to 18) interacts with substrate; it reads TAVGKT. The tract at residues 36-39 is interaction with substrate tRNA; it reads DSQQ.

Belongs to the IPP transferase family. As to quaternary structure, monomer. Requires Mg(2+) as cofactor.

The enzyme catalyses adenosine(37) in tRNA + dimethylallyl diphosphate = N(6)-dimethylallyladenosine(37) in tRNA + diphosphate. Its function is as follows. Catalyzes the transfer of a dimethylallyl group onto the adenine at position 37 in tRNAs that read codons beginning with uridine, leading to the formation of N6-(dimethylallyl)adenosine (i(6)A). The protein is tRNA dimethylallyltransferase of Streptococcus equi subsp. equi (strain 4047).